Reading from the N-terminus, the 555-residue chain is MPAPGDQHSRISNPFEDVKPRVSEYTAQEIATLQTRLERQLGPEYLSARAGPSGQKVHYVAAEKVIGLANEVFGFNGWSSSIQNIQVDFVDEHPQTLKISLGLHVVVRVTLRDGTFHEDIGYGHIENCKGKAMAFEKAKKEGTTDALKRALRNFGNVLGNCVYDKAYLAKVTKLKVEPTKFDELNLHRHADFAKKDVVAEPRLPPVKPEPSNTASAAPHPPLPPLPEADSFDDLLGEFDEADFCVVDADGHPDEVVLPENSHASGSSGNTGASTTNRGPGAPSGNQSNQQRPMQPSSRMNLNGPAGRPQPQTPNHQINRSGPQNGSINNQQNNHGMRPSPHMANQGRPPPPPQNNNNTSNGTGPHQRPLGNGPQQNTPPPNNGAATAPSGAEPVAFFSARAVARVPDDASLPPPPGTATPTALFNPKAESPSIRKTPGIDHSSSRPVSRTGQHVPAKPVQDGGGLANDNPSNNAGNGVQNQPQKPQPSQQRGSILNPQFDQSRRIGAPGGAASPLSNRNQYRPPTMMKRPPLADVPNGTSNGNGTPGDSKRMKLN.

The DNA-binding element occupies 148–152; that stretch reads KRALR. 2 disordered regions span residues 197-232 and 251-555; these read VVAE…DSFD and HPDE…MKLN. The segment covering 260–276 has biased composition (low complexity); the sequence is NSHASGSSGNTGASTTN. Composition is skewed to polar residues over residues 283 to 300 and 312 to 334; these read SGNQ…SRMN and TPNH…QNNH. Low complexity-rich tracts occupy residues 354-375 and 382-404; these read NNNN…GPQQ and NGAA…AVAR. The span at 468-478 shows a compositional bias: polar residues; it reads DNPSNNAGNGV. Residues 479–490 are compositionally biased toward low complexity; sequence QNQPQKPQPSQQ. Residues 491–500 show a composition bias toward polar residues; sequence RGSILNPQFD. Residues 536-547 are compositionally biased toward low complexity; the sequence is PNGTSNGNGTPG.

It belongs to the RAD52 family. As to quaternary structure, part of a complex that includes RAD51, RAD52 and RAD59.

It localises to the nucleus. Involved in DNA double-strand break (DSB) repair and recombination. Promotes the annealing of complementary single-stranded DNA and by stimulation of the RAD51 recombinase. The polypeptide is DNA repair and recombination protein rhm52 (RHM52) (Pyricularia oryzae (strain 70-15 / ATCC MYA-4617 / FGSC 8958) (Rice blast fungus)).